We begin with the raw amino-acid sequence, 207 residues long: MSTIIMDLCSYTRLGLSGYLVSRGVKKREINDIETVDELAIACGAHQPSVVFINEDCFIHTPSDSQQIKQIINQHPDTLFIVFMAIANVHFDEYLLVRKNLLISSKSIKPDSLDTLLGDILKKESGISGTINLPTLSLSRTESSMLRMWMEGQGTIQISDRMNIKAKTVSSHKGNIKRKIKTHNKQVIYHVVRLTDNVTNGIFVNMR.

One can recognise an HTH luxR-type domain in the interval 131–196 (INLPTLSLSR…VIYHVVRLTD (66 aa)). The H-T-H motif DNA-binding region spans 155 to 174 (TIQISDRMNIKAKTVSSHKG).

This sequence belongs to the RcsA family. As to quaternary structure, interacts with RcsB.

Its function is as follows. Component of the Rcs signaling system, which controls transcription of numerous genes. Binds, with RcsB, to the RcsAB box to regulate expression of genes. The protein is Transcriptional regulatory protein RcsA of Salmonella typhimurium (strain LT2 / SGSC1412 / ATCC 700720).